The sequence spans 297 residues: Ribosomal RNA small subunit methyltransferase H (297 aa).

Residues 34 to 36 (GGH), Asp-54, Phe-81, Asp-99, and Gln-106 each bind S-adenosyl-L-methionine.

Belongs to the methyltransferase superfamily. RsmH family.

The protein resides in the cytoplasm. The enzyme catalyses cytidine(1402) in 16S rRNA + S-adenosyl-L-methionine = N(4)-methylcytidine(1402) in 16S rRNA + S-adenosyl-L-homocysteine + H(+). Functionally, specifically methylates the N4 position of cytidine in position 1402 (C1402) of 16S rRNA. This chain is Ribosomal RNA small subunit methyltransferase H, found in Chlamydia pneumoniae (Chlamydophila pneumoniae).